A 155-amino-acid polypeptide reads, in one-letter code: Transcriptional repressor NrdR (155 aa).

Residues 3-34 (CPFCGHSSTQVLDSRVSEDGDTVRRRRRCEAC) fold into a zinc finger. One can recognise an ATP-cone domain in the interval 49 to 139 (PAIVKKNGSR…VYRSFEDVSE (91 aa)).

The protein belongs to the NrdR family. Requires Zn(2+) as cofactor.

Functionally, negatively regulates transcription of bacterial ribonucleotide reductase nrd genes and operons by binding to NrdR-boxes. The chain is Transcriptional repressor NrdR from Cupriavidus metallidurans (strain ATCC 43123 / DSM 2839 / NBRC 102507 / CH34) (Ralstonia metallidurans).